The following is a 28-amino-acid chain: Ranatuerin-2SEb (28 aa).

A disulfide bond links C23 and C28.

As to expression, expressed by the skin glands.

It localises to the secreted. In terms of biological role, mast cell degranulating peptide. Causes histamine release from rat peritoneal mast cells in vitro. Has antibacterial activity against the Gram-negative bacterium E.coli K12 and Gram-positive bacterium M.luteus NCT C2665. In Lithobates sevosus (Dusky gopher frog), this protein is Ranatuerin-2SEb.